A 92-amino-acid chain; its full sequence is Non-specific lipid-transfer protein A (92 aa).

Disulfide bonds link C3/C51, C13/C28, C29/C74, and C49/C88.

The protein belongs to the plant LTP family.

In terms of biological role, plant non-specific lipid-transfer proteins transfer phospholipids as well as galactolipids across membranes. May play a role in wax or cutin deposition in the cell walls of expanding epidermal cells and certain secretory tissues. This Ricinus communis (Castor bean) protein is Non-specific lipid-transfer protein A.